The chain runs to 501 residues: Sucrose transport protein SUT2 (501 aa).

The Cytoplasmic segment spans residues 1 to 31 (MPRRPSGGGGGAGPAAAAVRKVPLRKLLRAA). A helical transmembrane segment spans residues 32–52 (SVACGVQFGWALQLSLLTPYV). Over 53–55 (QEL) the chain is Extracellular. A helical membrane pass occupies residues 56–76 (GIPHAFASLVWLCGPLSGLLV). Residues 77–98 (QPLVGHLSDRIAPAASPLGRRR) lie on the Cytoplasmic side of the membrane. A helical transmembrane segment spans residues 99 to 119 (PFIAAGAASIAAAVLTVGFSA). The Extracellular portion of the chain corresponds to 120 to 135 (DLGRIFGDSITPGSTR). The chain crosses the membrane as a helical span at residues 136–156 (LGAIIVYLVGFWLLDVGNNAT). The Cytoplasmic portion of the chain corresponds to 157–176 (QGPCRAFLADLTENDPRRTR). The chain crosses the membrane as a helical span at residues 177–197 (IANAYFSLFMALGNILGYATG). Over 198-222 (AYSGWYKIFPFTVTPSCSISCANLK) the chain is Extracellular. A helical transmembrane segment spans residues 223–243 (SAFLLDIIILVVTTCITVASV). Residues 244–278 (QEPQSLGSDEADHPSTEQEAFLWELFGSFRYFTLP) are Cytoplasmic-facing. Residues 279-299 (VWMVLIVTALTWIGWFPFILF) traverse the membrane as a helical segment. The Extracellular segment spans residues 300-327 (DTDWMGREIYRGSPDDPSITQSYHDGVR). The chain crosses the membrane as a helical span at residues 328 to 348 (MGSFGLMLNSVLLGFTSIVLE). Residues 349-356 (KLCRKWGA) are Cytoplasmic-facing. Residues 357–377 (GLVWGVSNILMALCFVAMLVI) traverse the membrane as a helical segment. At 378-394 (TYVAKNMDYPPSGVPPT) the chain is on the extracellular side. Residues 395–415 (GIVIASLVVFTILGAPLAITY) form a helical membrane-spanning segment. Residues 416-433 (SIPYAMAASRVENLGLGQ) are Cytoplasmic-facing. The helical transmembrane segment at 434–454 (GLAMGILNLAIVIPQVIVSLG) threads the bilayer. Topologically, residues 455-467 (SGPWDQLFGGGNA) are extracellular. A helical transmembrane segment spans residues 468–488 (PAFAVAAAASFIGGLVAILGL). The Cytoplasmic segment spans residues 489–501 (PRARIASRRRGHR).

Belongs to the glycoside-pentoside-hexuronide (GPH) cation symporter transporter (TC 2.A.2.4) family. In terms of assembly, homodimer. As to expression, expressed in source leaf blades.

Its subcellular location is the cell membrane. Its pathway is glycan biosynthesis; sucrose metabolism. Functionally, responsible for the transport of sucrose into the cell, with the concomitant uptake of protons (symport system). May also transport other glucosides. In Oryza sativa subsp. indica (Rice), this protein is Sucrose transport protein SUT2 (SUT2).